A 1076-amino-acid chain; its full sequence is DNA-directed RNA polymerase subunit beta (1076 aa).

The protein belongs to the RNA polymerase beta chain family. In plastids the minimal PEP RNA polymerase catalytic core is composed of four subunits: alpha, beta, beta', and beta''. When a (nuclear-encoded) sigma factor is associated with the core the holoenzyme is formed, which can initiate transcription.

It localises to the plastid. The protein localises to the chloroplast. The enzyme catalyses RNA(n) + a ribonucleoside 5'-triphosphate = RNA(n+1) + diphosphate. Functionally, DNA-dependent RNA polymerase catalyzes the transcription of DNA into RNA using the four ribonucleoside triphosphates as substrates. In Triticum aestivum (Wheat), this protein is DNA-directed RNA polymerase subunit beta.